Consider the following 114-residue polypeptide: Ribosome-binding factor A (114 aa).

This sequence belongs to the RbfA family. In terms of assembly, monomer. Binds 30S ribosomal subunits, but not 50S ribosomal subunits or 70S ribosomes.

Its subcellular location is the cytoplasm. Its function is as follows. One of several proteins that assist in the late maturation steps of the functional core of the 30S ribosomal subunit. Associates with free 30S ribosomal subunits (but not with 30S subunits that are part of 70S ribosomes or polysomes). Required for efficient processing of 16S rRNA. May interact with the 5'-terminal helix region of 16S rRNA. This chain is Ribosome-binding factor A, found in Macrococcus caseolyticus (strain JCSC5402) (Macrococcoides caseolyticum).